The primary structure comprises 640 residues: Protein SPT10 (640 aa).

Positions 1 to 30 (MLNQHTSSVPDDEHLQMAHQNSSSEVRNEA) are disordered. The N-acetyltransferase domain maps to 121–259 (LDYSMDTEAD…AGILKGFDVP (139 aa)). The disordered stretch occupies residues 534-565 (PHLTNNESQDHANPVNRDERDMNHSVPDLDRN). Basic and acidic residues predominate over residues 549-565 (NRDERDMNHSVPDLDRN).

Required for normal transcription at a number of loci in yeast. Affects transcription at Ty1 elements, at PHO5, STE6 and ADH2. The protein is Protein SPT10 (SPT10) of Saccharomyces cerevisiae (strain ATCC 204508 / S288c) (Baker's yeast).